Consider the following 291-residue polypeptide: Probable cell wall amidase LytH (291 aa).

Residues 1–40 (MKKIDSWLTKHGLKNRLTLVVIVIFIIFLILLFMFVNLSD) form the signal peptide. Residues 41–105 (EDTGQITITE…WVAGWHTNLN (65 aa)) enclose the SH3b domain. The 165-residue stretch at 122-286 (IVLDPGHGGS…VEQAIVDGLK (165 aa)) folds into the MurNAc-LAA domain. The interval 123–147 (VLDPGHGGSDQGASSSTPSKSLEKN) is disordered. Over residues 133 to 142 (QGASSSTPSK) the composition is skewed to polar residues.

This sequence belongs to the N-acetylmuramoyl-L-alanine amidase 3 family.

It is found in the secreted. Probably involved in cell-wall metabolism. In Staphylococcus epidermidis (strain ATCC 12228 / FDA PCI 1200), this protein is Probable cell wall amidase LytH (lytH).